The chain runs to 349 residues: Protein RecA (349 aa).

An ATP-binding site is contributed by 69–76 (GPESSGKT).

Belongs to the RecA family.

The protein localises to the cytoplasm. Can catalyze the hydrolysis of ATP in the presence of single-stranded DNA, the ATP-dependent uptake of single-stranded DNA by duplex DNA, and the ATP-dependent hybridization of homologous single-stranded DNAs. It interacts with LexA causing its activation and leading to its autocatalytic cleavage. The chain is Protein RecA from Rippkaea orientalis (strain PCC 8801 / RF-1) (Cyanothece sp. (strain PCC 8801)).